The sequence spans 134 residues: Orexigenic neuropeptide QRFP (134 aa).

An N-terminal signal peptide occupies residues 1–18 (MRSPYSLPYLLFLPLGAC). Residues 19–88 (FPVLDTEEPV…RAGFQLRLGR (70 aa)) constitute a propeptide that is removed on maturation. Phe-131 is subject to Phenylalanine amide.

The protein belongs to the RFamide neuropeptide family. Ligand for the G-protein coupled receptor QRFPR/GPR103. As to expression, expressed in the hypothalamus.

It localises to the secreted. Stimulates feeding behavior, metabolic rate and locomotor activity and increases blood pressure. May have orexigenic activity. May promote aldosterone secretion by the adrenal gland. This Bos taurus (Bovine) protein is Orexigenic neuropeptide QRFP.